A 434-amino-acid polypeptide reads, in one-letter code: Adenylosuccinate synthetase (434 aa).

GTP contacts are provided by residues 11–17 (GDEGKGK) and 39–41 (GHT). The active-site Proton acceptor is Asp12. The Mg(2+) site is built by Asp12 and Gly39. Residues 12–15 (DEGK), 37–40 (NAGH), Thr134, Arg148, Asn230, Thr245, and Arg309 contribute to the IMP site. His40 serves as the catalytic Proton donor. 305-311 (VTTGRKR) contributes to the substrate binding site. GTP is bound by residues Arg311, 337 to 339 (KLD), and 419 to 421 (GTG).

This sequence belongs to the adenylosuccinate synthetase family. As to quaternary structure, homodimer. It depends on Mg(2+) as a cofactor.

Its subcellular location is the cytoplasm. The catalysed reaction is IMP + L-aspartate + GTP = N(6)-(1,2-dicarboxyethyl)-AMP + GDP + phosphate + 2 H(+). It functions in the pathway purine metabolism; AMP biosynthesis via de novo pathway; AMP from IMP: step 1/2. Plays an important role in the de novo pathway and in the salvage pathway of purine nucleotide biosynthesis. Catalyzes the first committed step in the biosynthesis of AMP from IMP. In Lachancea thermotolerans (strain ATCC 56472 / CBS 6340 / NRRL Y-8284) (Yeast), this protein is Adenylosuccinate synthetase.